A 349-amino-acid polypeptide reads, in one-letter code: Protein POOR HOMOLOGOUS SYNAPSIS 1 (349 aa).

The protein localises to the cytoplasm. Required for accurate chromosome segregation in meiosis. Required for pairing to occur between homologous chromosomes. Acts in early recombination steps and ensures pairing fidelity and proper repair of meiotic DNA double-strand-breaks. Regulates recombination and pairing of homologous chromosomes during meiotic prophase by controlling transport of RAD50 from cytoplasm to the nucleus. May affect pairing of the gene-rich fraction of the genome rather than preventing pairing between repetitive DNA elements. This chain is Protein POOR HOMOLOGOUS SYNAPSIS 1, found in Arabidopsis thaliana (Mouse-ear cress).